The following is a 450-amino-acid chain: Tubulin alpha-5 chain (450 aa).

Residues Gln-11, Glu-71, Gly-144, Thr-145, Thr-179, Asn-206, and Asn-228 each contribute to the GTP site. Mg(2+) is bound at residue Glu-71. Glu-254 is an active-site residue.

It belongs to the tubulin family. As to quaternary structure, dimer of alpha and beta chains. A typical microtubule is a hollow water-filled tube with an outer diameter of 25 nm and an inner diameter of 15 nM. Alpha-beta heterodimers associate head-to-tail to form protofilaments running lengthwise along the microtubule wall with the beta-tubulin subunit facing the microtubule plus end conferring a structural polarity. Microtubules usually have 13 protofilaments but different protofilament numbers can be found in some organisms and specialized cells. Requires Mg(2+) as cofactor. In terms of processing, undergoes a tyrosination/detyrosination cycle, the cyclic removal and re-addition of a C-terminal tyrosine residue by the enzymes tubulin tyrosine carboxypeptidase (TTCP) and tubulin tyrosine ligase (TTL), respectively.

It is found in the cytoplasm. The protein resides in the cytoskeleton. It carries out the reaction GTP + H2O = GDP + phosphate + H(+). In terms of biological role, tubulin is the major constituent of microtubules, a cylinder consisting of laterally associated linear protofilaments composed of alpha- and beta-tubulin heterodimers. Microtubules grow by the addition of GTP-tubulin dimers to the microtubule end, where a stabilizing cap forms. Below the cap, tubulin dimers are in GDP-bound state, owing to GTPase activity of alpha-tubulin. The sequence is that of Tubulin alpha-5 chain (TUBA5) from Zea mays (Maize).